The following is a 509-amino-acid chain: Sorting nexin MVP1 (509 aa).

Residues 1 to 25 (MDTYSGQNGWADTSNASPWGDTNDT) show a composition bias toward polar residues. A disordered region spans residues 1-28 (MDTYSGQNGWADTSNASPWGDTNDTMPI). The 120-residue stretch at 126–245 (QLDIISIEEI…TFLTVPTDLT (120 aa)) folds into the PX domain. Residues arginine 170, serine 172, lysine 196, and arginine 211 each contribute to the a 1,2-diacyl-sn-glycero-3-phospho-(1D-myo-inositol-3-phosphate) site.

This sequence belongs to the sorting nexin family.

It is found in the cytoplasm. The protein localises to the membrane. Required for vacuolar protein sorting. The polypeptide is Sorting nexin MVP1 (MVP1) (Candida glabrata (strain ATCC 2001 / BCRC 20586 / JCM 3761 / NBRC 0622 / NRRL Y-65 / CBS 138) (Yeast)).